A 612-amino-acid chain; its full sequence is Dihydroxy-acid dehydratase (612 aa).

D81 lines the Mg(2+) pocket. C122 lines the [2Fe-2S] cluster pocket. The Mg(2+) site is built by D123 and K124. Residue K124 is modified to N6-carboxylysine. C195 lines the [2Fe-2S] cluster pocket. Mg(2+) is bound at residue E491. Residue S517 is the Proton acceptor of the active site.

It belongs to the IlvD/Edd family. Homodimer. The cofactor is [2Fe-2S] cluster. Mg(2+) serves as cofactor.

The enzyme catalyses (2R)-2,3-dihydroxy-3-methylbutanoate = 3-methyl-2-oxobutanoate + H2O. The catalysed reaction is (2R,3R)-2,3-dihydroxy-3-methylpentanoate = (S)-3-methyl-2-oxopentanoate + H2O. Its pathway is amino-acid biosynthesis; L-isoleucine biosynthesis; L-isoleucine from 2-oxobutanoate: step 3/4. The protein operates within amino-acid biosynthesis; L-valine biosynthesis; L-valine from pyruvate: step 3/4. Its function is as follows. Functions in the biosynthesis of branched-chain amino acids. Catalyzes the dehydration of (2R,3R)-2,3-dihydroxy-3-methylpentanoate (2,3-dihydroxy-3-methylvalerate) into 2-oxo-3-methylpentanoate (2-oxo-3-methylvalerate) and of (2R)-2,3-dihydroxy-3-methylbutanoate (2,3-dihydroxyisovalerate) into 2-oxo-3-methylbutanoate (2-oxoisovalerate), the penultimate precursor to L-isoleucine and L-valine, respectively. The sequence is that of Dihydroxy-acid dehydratase from Haemophilus influenzae (strain 86-028NP).